Here is a 161-residue protein sequence, read N- to C-terminus: Zinc finger A20 and AN1 domain-containing stress-associated protein 4 (161 aa).

The segment at Pro-10–Gln-44 adopts an A20-type zinc-finger fold. Zn(2+) is bound by residues Cys-16, Cys-20, Cys-32, and Cys-35. Positions Thr-76–Pro-85 are enriched in basic and acidic residues. The interval Thr-76–Pro-99 is disordered. An AN1-type zinc finger spans residues Pro-96–Gly-142. Cys-102, Cys-105, Cys-116, Cys-118, Cys-123, His-126, His-132, and Cys-134 together coordinate Zn(2+).

May be involved in environmental stress response. This Arabidopsis thaliana (Mouse-ear cress) protein is Zinc finger A20 and AN1 domain-containing stress-associated protein 4 (SAP4).